The sequence spans 339 residues: Glycerol-3-phosphate dehydrogenase [NAD(P)+] (339 aa).

NADPH is bound by residues serine 11, tryptophan 12, and lysine 109. Residues lysine 109, glycine 140, and serine 142 each contribute to the sn-glycerol 3-phosphate site. Alanine 144 serves as a coordination point for NADPH. 5 residues coordinate sn-glycerol 3-phosphate: lysine 195, aspartate 249, serine 259, arginine 260, and asparagine 261. Lysine 195 serves as the catalytic Proton acceptor. NADPH is bound at residue arginine 260. Positions 284 and 286 each coordinate NADPH.

It belongs to the NAD-dependent glycerol-3-phosphate dehydrogenase family.

The protein resides in the cytoplasm. The catalysed reaction is sn-glycerol 3-phosphate + NAD(+) = dihydroxyacetone phosphate + NADH + H(+). It carries out the reaction sn-glycerol 3-phosphate + NADP(+) = dihydroxyacetone phosphate + NADPH + H(+). It participates in membrane lipid metabolism; glycerophospholipid metabolism. Its function is as follows. Catalyzes the reduction of the glycolytic intermediate dihydroxyacetone phosphate (DHAP) to sn-glycerol 3-phosphate (G3P), the key precursor for phospholipid synthesis. The polypeptide is Glycerol-3-phosphate dehydrogenase [NAD(P)+] (Lactobacillus helveticus (strain DPC 4571)).